Consider the following 578-residue polypeptide: Probable lysosomal cobalamin transporter (578 aa).

Transmembrane regions (helical) follow at residues 8–28 (LIWVVYAIAIAVLIAVASVFI) and 46–66 (IFAITTLLATVLLLPVDVALV). The N-linked (GlcNAc...) asparagine glycan is linked to asparagine 70. A run of 2 helical transmembrane segments spans residues 95–115 (VVYYLLYSLDALLCLLVIPFT) and 145–165 (TITFIAIVIVLFLVGFFVPVA). A glycan (N-linked (GlcNAc...) asparagine) is linked at asparagine 168. 6 helical membrane-spanning segments follow: residues 188–208 (ALTFALGLLITIGLCLYVLYT), 312–332 (LLGGIILLIIALVIWVSMLLT), 347–367 (GYILGHITVFNPINWVFVQAA), 375–395 (VIFTLLVLLFFCSSVVGIAIV), 419–439 (LTTAMLMLTILALNYSVSMVV), and 506–526 (FFGVIFFWGQFVFLGVYLIVV). The tract at residues 539–578 (RQMDEDAEEAEEEGLLASTGRRLDTAWQDITGRSNRQRDS) is disordered. Positions 540-552 (QMDEDAEEAEEEG) are enriched in acidic residues.

The protein belongs to the LIMR family. LMBRD1 subfamily.

It is found in the lysosome membrane. Probable lysosomal cobalamin transporter. Required to export cobalamin from lysosomes allowing its conversion to cofactors. This Aspergillus terreus (strain NIH 2624 / FGSC A1156) protein is Probable lysosomal cobalamin transporter.